We begin with the raw amino-acid sequence, 202 residues long: ATP-dependent Clp protease proteolytic subunit (202 aa).

The active-site Nucleophile is the Ser98. The active site involves His123.

This sequence belongs to the peptidase S14 family. As to quaternary structure, fourteen ClpP subunits assemble into 2 heptameric rings which stack back to back to give a disk-like structure with a central cavity, resembling the structure of eukaryotic proteasomes.

The protein resides in the cytoplasm. It catalyses the reaction Hydrolysis of proteins to small peptides in the presence of ATP and magnesium. alpha-casein is the usual test substrate. In the absence of ATP, only oligopeptides shorter than five residues are hydrolyzed (such as succinyl-Leu-Tyr-|-NHMec, and Leu-Tyr-Leu-|-Tyr-Trp, in which cleavage of the -Tyr-|-Leu- and -Tyr-|-Trp bonds also occurs).. Functionally, cleaves peptides in various proteins in a process that requires ATP hydrolysis. Has a chymotrypsin-like activity. Plays a major role in the degradation of misfolded proteins. The sequence is that of ATP-dependent Clp protease proteolytic subunit from Solidesulfovibrio magneticus (strain ATCC 700980 / DSM 13731 / RS-1) (Desulfovibrio magneticus).